Consider the following 121-residue polypeptide: UPF0102 protein AAur_2443 (121 aa).

This sequence belongs to the UPF0102 family.

In Paenarthrobacter aurescens (strain TC1), this protein is UPF0102 protein AAur_2443.